We begin with the raw amino-acid sequence, 218 residues long: Large ribosomal subunit protein uL3 (218 aa).

This sequence belongs to the universal ribosomal protein uL3 family. Part of the 50S ribosomal subunit. Forms a cluster with proteins L14 and L19.

Its function is as follows. One of the primary rRNA binding proteins, it binds directly near the 3'-end of the 23S rRNA, where it nucleates assembly of the 50S subunit. In Corynebacterium efficiens (strain DSM 44549 / YS-314 / AJ 12310 / JCM 11189 / NBRC 100395), this protein is Large ribosomal subunit protein uL3.